The sequence spans 3916 residues: Fusarin C synthetase (3916 aa).

The Ketosynthase family 3 (KS3) domain maps to 9-440 (KEPIAIIGTS…GTNVHAIIEQ (432 aa)). Active-site for beta-ketoacyl synthase activity residues include cysteine 182, histidine 319, and histidine 360. The malonyl-CoA:ACP transacylase (MAT) domain stretch occupies residues 548–866 (VFTGQGAQWP…QGTVARNIHD (319 aa)). The interval 935-1068 (HPLLGARSVE…GQLRVEFGCS (134 aa)) is N-terminal hotdog fold. Positions 935–1228 (HPLLGARSVE…GLTCTSLLRP (294 aa)) are dehydratase (DH) domain. The 297-residue stretch at 935–1231 (HPLLGARSVE…CTSLLRPGPS (297 aa)) folds into the PKS/mFAS DH domain. Histidine 967 acts as the Proton acceptor; for dehydratase activity in catalysis. A C-terminal hotdog fold region spans residues 1084 to 1231 (LTSVNMERFY…CTSLLRPGPS (148 aa)). The active-site Proton donor; for dehydratase activity is the aspartate 1141. The segment at 1347–1575 (IQAVGENLPS…VNDFVDAEKY (229 aa)) is C-methyltransferase (CMeT) domain. Residues 2092–2266 (TYLLIGCTGG…AASVMHIGMV (175 aa)) form a ketoreductase (KR) domain 1 region. Residues 2372–2449 (EILAVVEEEF…ELCSTVVSHL (78 aa)) enclose the Carrier 1 domain. Position 2409 is an O-(pantetheine 4'-phosphoryl)serine (serine 2409). The tract at residues 2487–2510 (NEPFTIRNSPNSTQVTSEAGVDED) is disordered. Positions 2492–2503 (IRNSPNSTQVTS) are enriched in polar residues. The interval 2522-2806 (PLSFAQERLW…VNLLPLRLKI (285 aa)) is condensation. The interval 2975 to 3385 (EFVVKQPDDT…RIAGDSQIKL (411 aa)) is adenylation. Residues 3493-3570 (KPLTETQERL…EMAAKIDGST (78 aa)) enclose the Carrier 2 domain. Serine 3530 is modified (O-(pantetheine 4'-phosphoryl)serine). The interval 3612–3833 (LTGATGFLGV…DFVPVDVVAA (222 aa)) is thiolester reductase (R) domain.

It in the C-terminal section; belongs to the NRP synthetase family.

It participates in mycotoxin biosynthesis. Functionally, fusarin C synthetase; part of the gene cluster that mediates the biosynthesis of the mycotoxin fusarin C. Within the cluster, FUS1, FUS2, FUS8 and FUS9 are sufficient for fusarin production. The roles of the other FUS members are yet undetermined. The fusarin C synthetase FUS1 is responsible for the condensation of one acetyl-coenzyme A (CoA) unit with six malonyl-CoA units and the amide linkage of the arising heptaketide and homoserine, subsequently releasing the first intermediate, prefusarin, as an alcohol with an open ring structure. The cytochrome P450 monooxygenase FUS8 participates in multiple oxidation processes at carbon C-20 and is able to use the FUS1 product as substrate, resulting in formation of 20-hydroxy-prefusarin. This reaction seems to be essential before the 2-pyrrolidone ring closure can be catalyzed by FUS2, generating 20-hydroxy-fusarin. FUS8 is able to further oxidizes carbon C-20 after ring closure, resulting in the formation of carboxy-fusarin C. As the last step, FUS9 methylates the hydroxyl group at C-21 to generate fusarin C. Fusarin C can then rearrange to epi-fusarin C, the (z)-isomers, and fusarin A and fusarin D. The sequence is that of Fusarin C synthetase from Gibberella fujikuroi (strain CBS 195.34 / IMI 58289 / NRRL A-6831) (Bakanae and foot rot disease fungus).